The primary structure comprises 809 residues: Lon protease (809 aa).

A Lon N-terminal domain is found at 20-216 (LPLLALRDVV…ELMNYLMNQS (197 aa)). Position 369-376 (369-376 (GPPGVGKT)) interacts with ATP. Positions 606–787 (EAQVGRVNGL…DEILPLALTS (182 aa)) constitute a Lon proteolytic domain. Active-site residues include S693 and K736.

Belongs to the peptidase S16 family. In terms of assembly, homohexamer. Organized in a ring with a central cavity.

Its subcellular location is the cytoplasm. It catalyses the reaction Hydrolysis of proteins in presence of ATP.. ATP-dependent serine protease that mediates the selective degradation of mutant and abnormal proteins as well as certain short-lived regulatory proteins. Required for cellular homeostasis and for survival from DNA damage and developmental changes induced by stress. Degrades polypeptides processively to yield small peptide fragments that are 5 to 10 amino acids long. Binds to DNA in a double-stranded, site-specific manner. This chain is Lon protease, found in Acinetobacter baumannii (strain AB307-0294).